The sequence spans 381 residues: Spermidine/putrescine import ATP-binding protein PotA (381 aa).

An ABC transporter domain is found at 22-252 (VELRNVFKFF…PKTSFVADFI (231 aa)). 54–61 (GPSGCGKT) contacts ATP.

The protein belongs to the ABC transporter superfamily. Spermidine/putrescine importer (TC 3.A.1.11.1) family. The complex is composed of two ATP-binding proteins (PotA), two transmembrane proteins (PotB and PotC) and a solute-binding protein (PotD).

The protein resides in the cell inner membrane. It catalyses the reaction ATP + H2O + polyamine-[polyamine-binding protein]Side 1 = ADP + phosphate + polyamineSide 2 + [polyamine-binding protein]Side 1.. Functionally, part of the ABC transporter complex PotABCD involved in spermidine/putrescine import. Responsible for energy coupling to the transport system. The polypeptide is Spermidine/putrescine import ATP-binding protein PotA (Nostoc sp. (strain PCC 7120 / SAG 25.82 / UTEX 2576)).